Reading from the N-terminus, the 391-residue chain is Pyruvate dehydrogenase E1 component subunit alpha, testis-specific form, mitochondrial (391 aa).

The N-terminal 30 residues, 1–30 (MRKMLATVLSQVFSGMVQKPALRGLLSSLK), are a transit peptide targeting the mitochondrion. Pyruvate is bound by residues histidine 93, tyrosine 119, arginine 120, alanine 158, glycine 166, valine 168, aspartate 197, glycine 198, alanine 199, asparagine 226, and tyrosine 228. The thiamine diphosphate site is built by tyrosine 119 and arginine 120. Residues glycine 166, valine 168, aspartate 197, glycine 198, alanine 199, and asparagine 226 each coordinate thiamine diphosphate. Aspartate 197 is a binding site for Mg(2+). The Mg(2+) site is built by asparagine 226 and tyrosine 228. Residue histidine 293 coordinates thiamine diphosphate. Serine 294 and serine 296 each carry phosphoserine. Residue serine 301 is modified to Phosphoserine; by PDK3.

In terms of assembly, heterotetramer of two PDHA2 and two PDHB subunits. The heterotetramer interacts with DLAT, and is part of the multimeric pyruvate dehydrogenase complex that contains multiple copies of pyruvate dehydrogenase (E1), dihydrolipoamide acetyltransferase (DLAT, E2) and lipoamide dehydrogenase (DLD, E3). These subunits are bound to an inner core composed of about 48 DLAT and 12 PDHX molecules. Requires thiamine diphosphate as cofactor. Mg(2+) serves as cofactor. In terms of tissue distribution, testis.

The protein localises to the mitochondrion matrix. It carries out the reaction N(6)-[(R)-lipoyl]-L-lysyl-[protein] + pyruvate + H(+) = N(6)-[(R)-S(8)-acetyldihydrolipoyl]-L-lysyl-[protein] + CO2. With respect to regulation, pyruvate dehydrogenase activity is inhibited by phosphorylation of PDHA2; it is reactivated by dephosphorylation. In terms of biological role, the pyruvate dehydrogenase complex catalyzes the overall conversion of pyruvate to acetyl-CoA and CO(2), and thereby links the glycolytic pathway to the tricarboxylic cycle. The polypeptide is Pyruvate dehydrogenase E1 component subunit alpha, testis-specific form, mitochondrial (Pdha2) (Rattus norvegicus (Rat)).